A 664-amino-acid chain; its full sequence is Putative peroxisomal acyl-coenzyme A oxidase 1.2 (664 aa).

FAD is bound at residue 399–404 (CGGHGY). The short motif at 662–664 (AKL) is the Microbody targeting signal element.

Belongs to the acyl-CoA oxidase family. FAD serves as cofactor.

Its subcellular location is the peroxisome. It carries out the reaction a 2,3-saturated acyl-CoA + O2 = a (2E)-enoyl-CoA + H2O2. In terms of biological role, catalyzes the desaturation of acyl-CoAs to 2-trans-enoyl-CoAs. The polypeptide is Putative peroxisomal acyl-coenzyme A oxidase 1.2 (ACX1.2) (Arabidopsis thaliana (Mouse-ear cress)).